A 388-amino-acid polypeptide reads, in one-letter code: 4-hydroxy-3-methylbut-2-en-1-yl diphosphate synthase (flavodoxin) (388 aa).

The [4Fe-4S] cluster site is built by C281, C284, C316, and E323.

Belongs to the IspG family. [4Fe-4S] cluster serves as cofactor.

It catalyses the reaction (2E)-4-hydroxy-3-methylbut-2-enyl diphosphate + oxidized [flavodoxin] + H2O + 2 H(+) = 2-C-methyl-D-erythritol 2,4-cyclic diphosphate + reduced [flavodoxin]. The protein operates within isoprenoid biosynthesis; isopentenyl diphosphate biosynthesis via DXP pathway; isopentenyl diphosphate from 1-deoxy-D-xylulose 5-phosphate: step 5/6. Converts 2C-methyl-D-erythritol 2,4-cyclodiphosphate (ME-2,4cPP) into 1-hydroxy-2-methyl-2-(E)-butenyl 4-diphosphate. The chain is 4-hydroxy-3-methylbut-2-en-1-yl diphosphate synthase (flavodoxin) from Paenarthrobacter aurescens (strain TC1).